Here is a 738-residue protein sequence, read N- to C-terminus: Phosphoribosylformylglycinamidine synthase subunit PurL (738 aa).

His53 is an active-site residue. The ATP site is built by Tyr56 and Lys95. Glu97 contributes to the Mg(2+) binding site. Substrate-binding positions include Ser98–His101 and Arg120. Catalysis depends on His99, which acts as the Proton acceptor. Asp121 contributes to the Mg(2+) binding site. Gln244 provides a ligand contact to substrate. A Mg(2+)-binding site is contributed by Asp274. Glu318–Gln320 contributes to the substrate binding site. ATP-binding residues include Asp499 and Gly536. Asn537 provides a ligand contact to Mg(2+). Ser539 lines the substrate pocket.

The protein belongs to the FGAMS family. Monomer. Part of the FGAM synthase complex composed of 1 PurL, 1 PurQ and 2 PurS subunits.

The protein localises to the cytoplasm. It carries out the reaction N(2)-formyl-N(1)-(5-phospho-beta-D-ribosyl)glycinamide + L-glutamine + ATP + H2O = 2-formamido-N(1)-(5-O-phospho-beta-D-ribosyl)acetamidine + L-glutamate + ADP + phosphate + H(+). Its pathway is purine metabolism; IMP biosynthesis via de novo pathway; 5-amino-1-(5-phospho-D-ribosyl)imidazole from N(2)-formyl-N(1)-(5-phospho-D-ribosyl)glycinamide: step 1/2. In terms of biological role, part of the phosphoribosylformylglycinamidine synthase complex involved in the purines biosynthetic pathway. Catalyzes the ATP-dependent conversion of formylglycinamide ribonucleotide (FGAR) and glutamine to yield formylglycinamidine ribonucleotide (FGAM) and glutamate. The FGAM synthase complex is composed of three subunits. PurQ produces an ammonia molecule by converting glutamine to glutamate. PurL transfers the ammonia molecule to FGAR to form FGAM in an ATP-dependent manner. PurS interacts with PurQ and PurL and is thought to assist in the transfer of the ammonia molecule from PurQ to PurL. The chain is Phosphoribosylformylglycinamidine synthase subunit PurL from Leuconostoc mesenteroides subsp. mesenteroides (strain ATCC 8293 / DSM 20343 / BCRC 11652 / CCM 1803 / JCM 6124 / NCDO 523 / NBRC 100496 / NCIMB 8023 / NCTC 12954 / NRRL B-1118 / 37Y).